The primary structure comprises 431 residues: Adenylosuccinate synthetase (431 aa).

GTP-binding positions include 13–19 (GDEGKGK) and 41–43 (GHT). D14 acts as the Proton acceptor in catalysis. Mg(2+) is bound by residues D14 and G41. IMP is bound by residues 14 to 17 (DEGK), 39 to 42 (NAGH), T130, R144, Q225, T240, and R304. H42 serves as the catalytic Proton donor. 300–306 (AVTGRPR) serves as a coordination point for substrate. GTP is bound by residues R306, 332-334 (KLD), and 415-417 (STG).

This sequence belongs to the adenylosuccinate synthetase family. Homodimer. The cofactor is Mg(2+).

It is found in the cytoplasm. It catalyses the reaction IMP + L-aspartate + GTP = N(6)-(1,2-dicarboxyethyl)-AMP + GDP + phosphate + 2 H(+). Its pathway is purine metabolism; AMP biosynthesis via de novo pathway; AMP from IMP: step 1/2. Plays an important role in the de novo pathway of purine nucleotide biosynthesis. Catalyzes the first committed step in the biosynthesis of AMP from IMP. In Legionella pneumophila (strain Paris), this protein is Adenylosuccinate synthetase.